The chain runs to 266 residues: Nickel import ATP-binding protein NikE (266 aa).

Positions 4-252 (ISADNIVKIY…RHPASRLLRE (249 aa)) constitute an ABC transporter domain. Residue 45–52 (GRSGCGKS) participates in ATP binding.

The protein belongs to the ABC transporter superfamily. Nickel importer (TC 3.A.1.5.3) family. As to quaternary structure, the complex is composed of two ATP-binding proteins (NikD and NikE), two transmembrane proteins (NikB and NikC) and a solute-binding protein (NikA).

The protein localises to the cell inner membrane. It carries out the reaction Ni(2+)(out) + ATP + H2O = Ni(2+)(in) + ADP + phosphate + H(+). Its function is as follows. Part of the ABC transporter complex NikABCDE involved in nickel import. Responsible for energy coupling to the transport system. The protein is Nickel import ATP-binding protein NikE of Brucella abortus (strain 2308).